A 69-amino-acid chain; its full sequence is MTNGKIWLVVKPTVGLPIGMLFAALLAVLIHGLLFVDGRLKSWWSEFPVAKPAVVSVQAAPAPVAAEVK.

Over 1-14 (MTNGKIWLVVKPTV) the chain is Cytoplasmic. A helical membrane pass occupies residues 15 to 35 (GLPIGMLFAALLAVLIHGLLF). H31 is an a bacteriochlorophyll binding site. At 36-69 (VDGRLKSWWSEFPVAKPAVVSVQAAPAPVAAEVK) the chain is on the periplasmic side.

Belongs to the antenna complex alpha subunit family. As to quaternary structure, the core complex is formed by different alpha and beta chains, binding bacteriochlorophyll molecules, and arranged most probably in tetrameric structures disposed around the reaction center. The non-pigmented gamma chains may constitute additional components.

Its subcellular location is the cell inner membrane. Functionally, antenna complexes are light-harvesting systems, which transfer the excitation energy to the reaction centers. The sequence is that of Light-harvesting polypeptide B-800/860 alpha chain from Rhodocyclus tenuis (Rhodospirillum tenue).